The primary structure comprises 623 residues: Chaperone protein HtpG (623 aa).

Positions 1–341 (MEKREFKAES…SQDLSLNISR (341 aa)) are a; substrate-binding. The b stretch occupies residues 342-549 (EMLQHDRQLS…EGEVSIEMEK (208 aa)). The c stretch occupies residues 550–623 (ILSAMPNNQG…FTNDICKLMK (74 aa)).

It belongs to the heat shock protein 90 family. As to quaternary structure, homodimer.

The protein localises to the cytoplasm. Its function is as follows. Molecular chaperone. Has ATPase activity. The protein is Chaperone protein HtpG of Clostridium perfringens (strain ATCC 13124 / DSM 756 / JCM 1290 / NCIMB 6125 / NCTC 8237 / Type A).